The chain runs to 469 residues: Glutamine synthetase (469 aa).

Residues 15–96 (EDVKFIDVRF…INFFIHDPIT (82 aa)) form the GS beta-grasp domain. Residues 104-469 (PRNVAKKAEA…PYEYEQYYDV (366 aa)) form the GS catalytic domain. The Mg(2+) site is built by E129 and E131. An ATP-binding site is contributed by E205. Mg(2+) contacts are provided by E210 and E218. 221 to 223 (YKF) is an ATP binding site. L-glutamate contacts are provided by residues 262 to 263 (NG) and G263. Mg(2+) is bound at residue H267. ATP contacts are provided by residues 269–271 (HQS) and S271. Positions 320, 326, and 338 each coordinate L-glutamate. Positions 338, 343, and 352 each coordinate ATP. E357 is a Mg(2+) binding site. Position 359 (R359) interacts with L-glutamate. Y397 is modified (O-AMP-tyrosine).

It belongs to the glutamine synthetase family. Oligomer of 12 subunits arranged in the form of two hexagons. Requires Mg(2+) as cofactor.

It localises to the cytoplasm. The enzyme catalyses L-glutamate + NH4(+) + ATP = L-glutamine + ADP + phosphate + H(+). The activity of this enzyme could be controlled by adenylation under conditions of abundant glutamine. Functionally, catalyzes the ATP-dependent biosynthesis of glutamine from glutamate and ammonia. This chain is Glutamine synthetase, found in Streptomyces viridochromogenes.